The chain runs to 338 residues: Probable cytosolic iron-sulfur protein assembly protein Ciao1 (338 aa).

8 WD repeats span residues Gly-12 to Pro-51, Gly-58 to Asn-97, Gly-102 to Cys-141, Thr-147 to Ser-186, Ser-193 to Gly-232, Ala-234 to Phe-252, His-253 to Glu-291, and Ala-302 to Glu-338.

It belongs to the WD repeat CIA1 family.

Functionally, essential component of the cytosolic iron-sulfur (Fe/S) protein assembly machinery. Required for the maturation of extramitochondrial Fe/S proteins. In Culex quinquefasciatus (Southern house mosquito), this protein is Probable cytosolic iron-sulfur protein assembly protein Ciao1.